We begin with the raw amino-acid sequence, 198 residues long: Autophagy-related protein 16 (198 aa).

The stretch at 24-177 forms a coiled coil; the sequence is ELVQTCSQMA…NKELVDRWMK (154 aa).

The protein belongs to the ATG16 family. As to quaternary structure, homodimer. Part of the ATG5-ATG12/ATG16 complex. Several units of each may be present in this complex. Interacts directly with ATG12.

It localises to the preautophagosomal structure membrane. Stabilizes the ATG5-ATG12 conjugate. The ATG5-ATG12/ATG16 complex is required for efficient promotion of ATG8-conjugation to phosphatidylethanolamine and ATG8 localization to the pre-autophagosomal structure (PAS). Also recruits ATG3 to the PAS. Involved in endoplasmic reticulum-specific autophagic process and is essential for the survival of cells subjected to severe ER stress. Autophagy is required for proper vegetative growth, asexual/sexual reproduction, and full virulence. Autophagy is particularly involved in the biosynthesis of deoxynivalenol (DON), an important virulence determinant. This Gibberella zeae (strain ATCC MYA-4620 / CBS 123657 / FGSC 9075 / NRRL 31084 / PH-1) (Wheat head blight fungus) protein is Autophagy-related protein 16.